The sequence spans 1606 residues: Fatty acid synthase apf5 (1606 aa).

A Carrier domain is found at 142–218 (VPVSAILISL…ETLSTSHDGQ (77 aa)). Serine 177 bears the O-(pantetheine 4'-phosphoryl)serine mark. The Ketosynthase family 3 (KS3) domain maps to 996–1539 (KESLIEVALQ…QKGGQALLVH (544 aa)). Active-site for beta-ketoacyl synthase activity residues include cysteine 1182, histidine 1424, and histidine 1465.

Belongs to the thiolase-like superfamily. Fungal fatty acid synthetase subunit alpha family.

It carries out the reaction a fatty acyl-[ACP] + malonyl-[ACP] + H(+) = a 3-oxoacyl-[ACP] + holo-[ACP] + CO2. Its pathway is secondary metabolite biosynthesis. In terms of biological role, fatty acid synthase; part of the gene cluster that mediates the biosynthesis of the cyclic tetrapeptide apicidin F (APF). The non-ribosomal peptide synthetase apf1 incorporates four different amino acids to produce apicidin F: L-phenylalanine, D-pipecolic acid (D-pip), N-methoxy-L-tryptophan and L-2-aminooctanedioic acid. L-Phenylalanine is the only proteinogenic amino acid directly used by apf1. The 3 other apf1 substrates are non-proteinogenic and have to be modified by other enzymes of the cluster. Lysine is converted to delta-1-pyrroline-5-carboxylate (P5C) which is reduced to L-pipecolic acid (L-pip) by apf3. L-pip is epimerized to D-pip, probably by apf1 activity, prior to incorporation. L-Tryptophan is N-oxidyzed by one of the cytochrome P450 monooxygenases (apf7 or apf8), and further methylated at the hydroxy group by the O-methyltransferase apf6 to yield N-methoxy-L-tryptophan. The synthesis of the fourth apf1 substrate is more complex. The fatty acid synthase apf5 is involved in the synthesis of the octanoic acid backbone of L-2-aminooctanedioic acid by fixing one acetyl-CoA unit and three malonyl-CoA units. Then one of the cytochrome P450 monooxygenases (apf7 or apf8) may oxidize this backbone to 2-oxooctanoic acid. The aminotransferase apf4 is predicted to catalyze the exchange of the keto group with an amino group. The next step would be the oxidation of 2-aminooctanoic acid by one of the cytochrome P450 monooxygenases (apf7 or apf8). The last step is the oxidation of 2-amino-8-hydroxyoctanoic acid to 2-aminooctanedioic acid is catalyzed by the FAD-dependent monooxygenase apf9. The sequence is that of Fatty acid synthase apf5 from Gibberella fujikuroi (strain CBS 195.34 / IMI 58289 / NRRL A-6831) (Bakanae and foot rot disease fungus).